The sequence spans 76 residues: Kappa-scoloptoxin(15)-Ssd3a (76 aa).

An N-terminal signal peptide occupies residues 1-23; the sequence is MEGKIIFICFLVVLLTLPELISS.

Post-translationally, contains 2 disulfide bonds. As to expression, expressed by the venom gland.

It is found in the secreted. Functionally, acts as a voltage-gated potassium channel inhibitor. This Scolopendra dehaani (Thai centipede) protein is Kappa-scoloptoxin(15)-Ssd3a.